We begin with the raw amino-acid sequence, 371 residues long: Glutamate 5-kinase (371 aa).

K8 provides a ligand contact to ATP. The substrate site is built by S49, D136, and N149. ATP-binding positions include 169-170 and 213-219; these read TD and TGGMATK. One can recognise a PUA domain in the interval 278–356; sequence TGKLILDDGA…EDIPQVLGYA (79 aa).

It belongs to the glutamate 5-kinase family.

Its subcellular location is the cytoplasm. The enzyme catalyses L-glutamate + ATP = L-glutamyl 5-phosphate + ADP. It participates in amino-acid biosynthesis; L-proline biosynthesis; L-glutamate 5-semialdehyde from L-glutamate: step 1/2. In terms of biological role, catalyzes the transfer of a phosphate group to glutamate to form L-glutamate 5-phosphate. This Acaryochloris marina (strain MBIC 11017) protein is Glutamate 5-kinase.